A 151-amino-acid polypeptide reads, in one-letter code: uncharacterized protein (151 aa).

Residues 40-57 (QMNRRNSENNTFDASNVG) are compositionally biased toward polar residues. Residues 40–125 (QMNRRNSENN…KRQPHYAEPI (86 aa)) form a disordered region. Low complexity predominate over residues 83–110 (QRQNGRQHQHAGQQQPQHQHTQSQTRQT).

This is an uncharacterized protein from Bacillus subtilis (strain 168).